A 429-amino-acid chain; its full sequence is Enolase (429 aa).

A (2R)-2-phosphoglycerate-binding site is contributed by glutamine 168. The active-site Proton donor is the glutamate 210. Mg(2+) is bound by residues aspartate 247, glutamate 288, and aspartate 315. The (2R)-2-phosphoglycerate site is built by lysine 340, arginine 369, serine 370, and lysine 391. The active-site Proton acceptor is the lysine 340.

Belongs to the enolase family. Mg(2+) serves as cofactor.

The protein localises to the cytoplasm. The protein resides in the secreted. Its subcellular location is the cell surface. It carries out the reaction (2R)-2-phosphoglycerate = phosphoenolpyruvate + H2O. Its pathway is carbohydrate degradation; glycolysis; pyruvate from D-glyceraldehyde 3-phosphate: step 4/5. Functionally, catalyzes the reversible conversion of 2-phosphoglycerate (2-PG) into phosphoenolpyruvate (PEP). It is essential for the degradation of carbohydrates via glycolysis. The polypeptide is Enolase (Trichormus variabilis (strain ATCC 29413 / PCC 7937) (Anabaena variabilis)).